A 114-amino-acid polypeptide reads, in one-letter code: Ribonuclease P protein component (114 aa).

The protein belongs to the RnpA family. As to quaternary structure, consists of a catalytic RNA component (M1 or rnpB) and a protein subunit.

It carries out the reaction Endonucleolytic cleavage of RNA, removing 5'-extranucleotides from tRNA precursor.. RNaseP catalyzes the removal of the 5'-leader sequence from pre-tRNA to produce the mature 5'-terminus. It can also cleave other RNA substrates such as 4.5S RNA. The protein component plays an auxiliary but essential role in vivo by binding to the 5'-leader sequence and broadening the substrate specificity of the ribozyme. This is Ribonuclease P protein component from Legionella pneumophila (strain Paris).